The following is a 423-amino-acid chain: Ferrochelatase, mitochondrial (423 aa).

The N-terminal 54 residues, 1 to 54 (MRSLGANMAAALRAAGVLLRDPLVSSSWRVYQPWRWKSVAAAAAATTETAQHAQ), are a transit peptide targeting the mitochondrion. Lys57 bears the N6-acetyllysine mark. Residues Arg115, Tyr123, and Ser130 each coordinate protoporphyrin IX. Lys138 bears the N6-succinyllysine mark. Residue Cys196 coordinates [2Fe-2S] cluster. Catalysis depends on residues His230 and Asp383. Cys403, Cys406, and Cys411 together coordinate [2Fe-2S] cluster. Lys415 bears the N6-acetyllysine; alternate mark. Position 415 is an N6-succinyllysine; alternate (Lys415).

This sequence belongs to the ferrochelatase family. Homodimer. Homotetramer. Interaction with PGRMC1; the interaction results in decreased FECH activity. Interacts with ABCB10 and SLC25A37; this interaction forms an oligomeric complex. Forms a complex with ABCB7 and ABCB10, where a dimeric FECH bridges ABCB7 and ABCB10 homodimers; this complex may be required for cellular iron homeostasis, mitochondrial function and heme biosynthesis. Interacts with ABCB7 and ABCB10. It depends on [2Fe-2S] cluster as a cofactor.

It is found in the mitochondrion inner membrane. It catalyses the reaction heme b + 2 H(+) = protoporphyrin IX + Fe(2+). Its pathway is porphyrin-containing compound metabolism; protoheme biosynthesis; protoheme from protoporphyrin-IX: step 1/1. Its function is as follows. Catalyzes the ferrous insertion into protoporphyrin IX and participates in the terminal step in the heme biosynthetic pathway. In Pan troglodytes (Chimpanzee), this protein is Ferrochelatase, mitochondrial.